We begin with the raw amino-acid sequence, 428 residues long: Enolase (428 aa).

A (2R)-2-phosphoglycerate-binding site is contributed by Gln163. Glu205 acts as the Proton donor in catalysis. Mg(2+)-binding residues include Asp242, Glu286, and Asp313. (2R)-2-phosphoglycerate-binding residues include Lys338, Arg367, Ser368, and Lys389. Lys338 (proton acceptor) is an active-site residue.

The protein belongs to the enolase family. Requires Mg(2+) as cofactor.

Its subcellular location is the cytoplasm. The protein localises to the secreted. It localises to the cell surface. The enzyme catalyses (2R)-2-phosphoglycerate = phosphoenolpyruvate + H2O. The protein operates within carbohydrate degradation; glycolysis; pyruvate from D-glyceraldehyde 3-phosphate: step 4/5. In terms of biological role, catalyzes the reversible conversion of 2-phosphoglycerate (2-PG) into phosphoenolpyruvate (PEP). It is essential for the degradation of carbohydrates via glycolysis. This is Enolase from Acidovorax sp. (strain JS42).